Here is a 475-residue protein sequence, read N- to C-terminus: Amino acid permease 8 (475 aa).

A disordered region spans residues 1-22; that stretch reads MDAYNNPSAVESGDAAVKSVDD. At 1-31 the chain is on the cytoplasmic side; sequence MDAYNNPSAVESGDAAVKSVDDDGREKRTGT. Helical transmembrane passes span 32 to 52 and 53 to 73; these read FWTASAHIITAVIGSGVLSLA and WAIAQLGWVAGTTVLVAFAII. Residues 74–120 are Cytoplasmic-facing; it reads TYYTSTLLADCYRSPDSITGTRNYNYMGVVRSYLGGKKVQLCGVAQY. The chain crosses the membrane as a helical span at residues 121 to 141; it reads VNLVGVTIGYTITASISLVAI. Topologically, residues 142-157 are extracellular; the sequence is GKSNCYHDKGHKAKCS. Residues 158–178 traverse the membrane as a helical segment; that stretch reads VSNYPYMAAFGIVQIILSQLP. The Cytoplasmic segment spans residues 179–185; sequence NFHKLSF. Residues 186 to 206 form a helical membrane-spanning segment; the sequence is LSIIAAVMSFSYASIGIGLAI. At 207-236 the chain is on the extracellular side; it reads ATVASGKIGKTELTGTVIGVDVTASEKVWK. Residues 237–257 traverse the membrane as a helical segment; that stretch reads LFQAIGDIAFSYAFTTILIEI. Topologically, residues 258-276 are cytoplasmic; that stretch reads QDTLRSSPPENKVMKRASL. Residues 277–297 form a helical membrane-spanning segment; that stretch reads VGVSTTTVFYILCGCIGYAAF. The Extracellular segment spans residues 298–314; sequence GNQAPGDFLTDFGFYEP. A helical membrane pass occupies residues 315–335; sequence YWLIDFANACIALHLIGAYQV. The Cytoplasmic segment spans residues 336-378; sequence YAQPFFQFVEENCNKKWPQSNFINKEYSSKVPLLGKCRVNLFR. Residues 379–398 traverse the membrane as a helical segment; that stretch reads LVWRTCYVVLTTFVAMIFPF. Over 399 to 401 the chain is Extracellular; the sequence is FNA. A helical transmembrane segment spans residues 402–424; sequence ILGLLGAFAFWPLTVYFPVAMHI. The Cytoplasmic portion of the chain corresponds to 425 to 441; sequence AQAKVKKYSRRWLALNL. Residues 442-462 form a helical membrane-spanning segment; it reads LVLVCLIVSALAAVGSIIGLI. Over 463–475 the chain is Extracellular; the sequence is NSVKSYKPFKNLD.

Belongs to the amino acid/polyamine transporter 2 family. Amino acid/auxin permease (AAAP) (TC 2.A.18.2) subfamily. As to expression, expressed in flower buds, siliques, developing seeds and funiculi.

It localises to the cell membrane. Amino acid-proton symporter. Stereospecific transporter with a broad specificity for glutamate, aspartate and neutral and acidic amino acids. In Arabidopsis thaliana (Mouse-ear cress), this protein is Amino acid permease 8 (AAP8).